Reading from the N-terminus, the 238-residue chain is MTNQLPRVVTIRELLEAGAHFGHPTNRWNPKMKPYIFTARNGIHIIDLQKTVAGLSQAYQFITEVTARGEKILFVGTKKQAQEAVMEEAIRAGQFYINRRWLGGTLTNFATMKRRLKLLSDLEEQRDRGDFARLTKAEAAKLEEKIDRLNRVFAGLKGMDRLPGAIFIVDPRKEELAVREADKEGIPIVAMVDTNCDPDPIDYVIPCNDDAIRGIRLMTSKIADAAIEGMRRRESSQE.

Belongs to the universal ribosomal protein uS2 family.

The protein is Small ribosomal subunit protein uS2 of Chloroflexus aggregans (strain MD-66 / DSM 9485).